Reading from the N-terminus, the 88-residue chain is MANTTSAKKATRKIARRTAVNKARRSRVRGFIRKVEEAIATGDLAVATEALKAAQPEIQRAATRGVLHGNTASRKVSRLAQRVKALSA.

The interval 1–21 (MANTTSAKKATRKIARRTAVN) is disordered.

Belongs to the bacterial ribosomal protein bS20 family.

Functionally, binds directly to 16S ribosomal RNA. The polypeptide is Small ribosomal subunit protein bS20 (Agrobacterium fabrum (strain C58 / ATCC 33970) (Agrobacterium tumefaciens (strain C58))).